The chain runs to 325 residues: MSVITPDTVEILLTVLKAVVILLVVVTCGAFMSFGERRLLGLFQNRYGPSRVGWGGSLQLVADMIKMFFKEDWVPPFTDRLIFTLAPMIAFCSLLLSFAIVPVAPGWMGADLNIGILFFLMMAGLAVYAVLFAGWSSNNKYSLLGAMRASAQTLSYEVFLGLSLMGVVAQAGSFNMQVIVDSQTHLWNIIPQFFGFLTFIIAGVAVCHRHPFDQPEAEQELADGYHIEYSGMKFGLFFVGEYIGIVTISALIVTLFFGGWHGPWLPPFIWFAIKTAFFMVMFILVRASLPRPRYDQVMAFGWRICLPLTLINLLVTAAVILYHAQ.

Transmembrane regions (helical) follow at residues 11–31, 50–69, 81–101, 114–134, 154–174, 186–206, 237–257, 265–285, and 304–324; these read ILLTVLKAVVILLVVVTCGAF, SRVGWGGSLQLVADMIKMFF, LIFTLAPMIAFCSLLLSFAIV, IGILFFLMMAGLAVYAVLFAG, LSYEVFLGLSLMGVVAQAGSF, LWNIIPQFFGFLTFIIAGVAV, FFVGEYIGIVTISALIVTLFF, LPPFIWFAIKTAFFMVMFILV, and ICLPLTLINLLVTAAVILYHA.

The protein belongs to the complex I subunit 1 family. In terms of assembly, NDH-1 is composed of 13 different subunits. Subunits NuoA, H, J, K, L, M, N constitute the membrane sector of the complex.

Its subcellular location is the cell inner membrane. The enzyme catalyses a quinone + NADH + 5 H(+)(in) = a quinol + NAD(+) + 4 H(+)(out). Its function is as follows. NDH-1 shuttles electrons from NADH, via FMN and iron-sulfur (Fe-S) centers, to quinones in the respiratory chain. The immediate electron acceptor for the enzyme in this species is believed to be ubiquinone. Couples the redox reaction to proton translocation (for every two electrons transferred, four hydrogen ions are translocated across the cytoplasmic membrane), and thus conserves the redox energy in a proton gradient. This subunit may bind ubiquinone. In Edwardsiella ictaluri (strain 93-146), this protein is NADH-quinone oxidoreductase subunit H.